We begin with the raw amino-acid sequence, 97 residues long: Large ribosomal subunit protein bL36m (97 aa).

Belongs to the bacterial ribosomal protein bL36 family. Component of the mitochondrial ribosome large subunit (39S) which comprises a 16S rRNA and about 50 distinct proteins.

It is found in the mitochondrion. The protein is Large ribosomal subunit protein bL36m (Mrpl36) of Rattus norvegicus (Rat).